A 464-amino-acid chain; its full sequence is Type I restriction enzyme EcoKI specificity subunit (464 aa).

This sequence belongs to the type-I restriction system S methylase family. In terms of assembly, the type I restriction/modification system is composed of three polypeptides R, M and S. The restriction enzyme has stoichiometry R(2)M(2)S(1). The methyltransferase is composed of M(2)S(1). As to quaternary structure, (Microbial infection) Interacts with Escherichia phage T7 protein Ocr; this interaction leads to the inhibition of the methyltransferase restriction enzyme M.EcoKI composed of M(2)S(1).

In terms of biological role, the specificity (S) subunit of a type I restriction enzyme; this subunit dictates DNA sequence specificity. The M and S subunits together form a methyltransferase (MTase) that methylates A-2 on the top and A-3 on the bottom strand of the sequence 5'-AACN(6)GTGC-3'. In the presence of the R subunit the complex can also act as an endonuclease, binding to the same target sequence but cutting the DNA some distance from this site. Whether the DNA is cut or modified depends on the methylation state of the target sequence. When the target site is unmodified, the DNA is cut. When the target site is hemimethylated, the complex acts as a maintenance MTase modifying the DNA so that both strands become methylated. After locating a non-methylated recognition site, the enzyme complex serves as a molecular motor that translocates DNA in an ATP-dependent manner until a collision occurs that triggers cleavage. The polypeptide is Type I restriction enzyme EcoKI specificity subunit (Escherichia coli (strain K12)).